Reading from the N-terminus, the 1108-residue chain is Receptor-type guanylate cyclase gcy-20 (1108 aa).

An N-terminal signal peptide occupies residues 1 to 15 (MRILLLLLQNILVFC). The Extracellular portion of the chain corresponds to 16–474 (QFLQTIKVGL…ECPADFVKEY (459 aa)). N-linked (GlcNAc...) asparagine glycans are attached at residues Asn-66, Asn-131, Asn-319, Asn-341, Asn-366, and Asn-380. Residues 475–495 (LVYTIIAAFIVILALLAGCAG) form a helical membrane-spanning segment. The Protein kinase domain occupies 483-803 (FIVILALLAG…IEQVRSHLNG (321 aa)). Residues 489-497 (LLAGCAGLL) and Lys-571 each bind ATP. Over 496-1108 (LLYTMHMKRK…QAGDNNSETV (613 aa)) the chain is Cytoplasmic. The region spanning 876–1006 (TIFFSDVVQF…DAVNTASRME (131 aa)) is the Guanylate cyclase domain. The segment at 1083–1108 (LEKNAEGSETSSLSVDQAGDNNSETV) is disordered. A compositionally biased stretch (polar residues) spans 1089–1108 (GSETSSLSVDQAGDNNSETV).

It belongs to the adenylyl cyclase class-4/guanylyl cyclase family. As to expression, expressed asymmetrically in ASE left (ASEL) sensory neuron. Expressed in excretory gland and canal cell.

The protein localises to the cell membrane. The enzyme catalyses GTP = 3',5'-cyclic GMP + diphosphate. Its function is as follows. Guanylate cyclase involved in the production of the second messenger cGMP. This chain is Receptor-type guanylate cyclase gcy-20, found in Caenorhabditis elegans.